Here is a 1685-residue protein sequence, read N- to C-terminus: Collagen alpha-5(IV) chain (1685 aa).

An N-terminal signal peptide occupies residues 1-26; the sequence is MKLRGVSLAAGLFLLALSLWGQPAEA. The nonhelical region (NC2) stretch occupies residues 27–41; sequence AACYGCSPGSKCDCS. The interval 42–1456 is triple-helical region; sequence GIKGEKGERG…QGPPGPPGTS (1415 aa). Residues 49 to 1459 are disordered; that stretch reads ERGFPGLEGH…PGPPGTSSVA (1411 aa). A compositionally biased stretch (low complexity) spans 52 to 61; sequence FPGLEGHPGL. Positions 62–73 are enriched in pro residues; that stretch reads PGFPGPEGPPGP. N125 is a glycosylation site (N-linked (GlcNAc...) asparagine). Positions 188–212 are enriched in pro residues; that stretch reads TGIPGPIGPPGPPGLMGPPGPPGLP. Low complexity predominate over residues 214–225; the sequence is PKGNMGLNFQGP. Positions 246–257 are enriched in basic and acidic residues; the sequence is EQKRPIDVEFQK. The segment covering 266–281 has biased composition (pro residues); it reads RGPPGPPGIRGPPGPP. Basic and acidic residues-rich tracts occupy residues 284 to 305 and 324 to 333; these read EKGE…KDGE and PGRDGEKGQK. Positions 413-430 are enriched in low complexity; that stretch reads PPGISIPGPPGLDGQPGA. Composition is skewed to pro residues over residues 431–445, 493–505, 620–630, and 709–727; these read PGLP…PHIP, PGQP…PGPP, MGPPGFGPPGP, and PGPP…PGAP. Residues 788 to 797 show a composition bias toward low complexity; that stretch reads RTGLDGLPGP. Pro residues-rich tracts occupy residues 848–859 and 868–880; these read PGPPGLDVPGPP and PGAP…PGSP. 5 stretches are compositionally biased toward low complexity: residues 882–901, 912–931, 983–999, 1010–1026, and 1111–1120; these read LPGK…MGMM, IPGR…QGQP, YQGL…SGQP, NPGL…PGLK, and TPGAKGQPGL. Residues 1139–1148 show a composition bias toward pro residues; it reads PGNPGLPGEP. Gly residues-rich tracts occupy residues 1149–1158 and 1202–1211; these read GPVGGGGHPG and GQKGDGGLPG. 2 stretches are compositionally biased toward pro residues: residues 1234–1243 and 1256–1274; these read QGPPGPPGSP and PQGP…PPGL. Positions 1295 to 1308 are enriched in low complexity; that stretch reads LPGLKGDQGPPGLQ. Pro residues predominate over residues 1353–1362; sequence IGPPGPPGLP. One can recognise a Collagen IV NC1 domain in the interval 1461–1685; it reads GFLITRHSQT…SRCQVCMKRT (225 aa). 6 disulfides stabilise this stretch: C1476/C1567, C1509/C1564, C1521/C1527, C1586/C1681, C1620/C1678, and C1632/C1638. Residue M1549 forms an S-Lysyl-methionine sulfilimine (Met-Lys) (interchain with K-1667) linkage. K1667 is covalently cross-linked (S-Lysyl-methionine sulfilimine (Lys-Met) (interchain with M-1549)).

The protein belongs to the type IV collagen family. As to quaternary structure, there are six type IV collagen isoforms, alpha 1(IV)-alpha 6(IV), each of which can form a triple helix structure with 2 other chains to generate type IV collagen network. Post-translationally, prolines at the third position of the tripeptide repeating unit (G-X-Y) are hydroxylated in some or all of the chains. Type IV collagens contain numerous cysteine residues which are involved in inter- and intramolecular disulfide bonding. 12 of these, located in the NC1 domain, are conserved in all known type IV collagens. In terms of processing, the trimeric structure of the NC1 domains is stabilized by covalent bonds between Lys and Met residues. In terms of tissue distribution, isoform 2 is found in kidney.

It is found in the secreted. The protein localises to the extracellular space. Its subcellular location is the extracellular matrix. It localises to the basement membrane. Its function is as follows. Type IV collagen is the major structural component of glomerular basement membranes (GBM), forming a 'chicken-wire' meshwork together with laminins, proteoglycans and entactin/nidogen. This chain is Collagen alpha-5(IV) chain (COL4A5), found in Homo sapiens (Human).